Consider the following 483-residue polypeptide: Endoplasmic reticulum lectin 1 (483 aa).

Positions 1 to 33 (MEEGDGGLRSLVPGGPLLLVLYGLLEASGGGRA) are cleaved as a signal peptide. MRH domains lie at 111–246 (SSCS…LCSH) and 342–469 (SYCF…ICKI). Cys113 and Cys126 are joined by a disulfide. An N-linked (GlcNAc...) asparagine glycan is attached at Asn195. Intrachain disulfides connect Cys199/Cys232, Cys215/Cys244, Cys344/Cys357, Cys421/Cys455, and Cys436/Cys467.

In terms of assembly, may form a complex with OS9, HSPA5, SYVN1, and SEL1L with which it interacts directly. Interacts (via PRKCSH 2 domain) with KREMEN2 (when glycosylated). Interacts with HSPA5. Post-translationally, N-glycosylated.

Its subcellular location is the endoplasmic reticulum lumen. Its function is as follows. Probable lectin that binds selectively to improperly folded lumenal proteins. May function in endoplasmic reticulum quality control and endoplasmic reticulum-associated degradation (ERAD) of both non-glycosylated proteins and glycoproteins. This chain is Endoplasmic reticulum lectin 1 (Erlec1), found in Mus musculus (Mouse).